Reading from the N-terminus, the 1544-residue chain is Transcriptional activator GLI3 (1544 aa).

2 stretches are compositionally biased toward polar residues: residues 1 to 10 (MEAQSHSSTT) and 402 to 429 (NPVQ…SSTG). Disordered regions lie at residues 1 to 83 (MEAQ…EERA) and 373 to 477 (SAFG…QEPE). A compositionally biased stretch (basic and acidic residues) spans 463 to 476 (VKEEGDKDESKQEP). A C2H2-type 1 zinc finger spans residues 482 to 509 (TNCHWEGCSREFDTQEQLVHHINNDHIH). The C2H2-type 2; degenerate zinc-finger motif lies at 520-542 (LDCSREQKPFKAQYMLVVHMRRH). 3 consecutive C2H2-type zinc fingers follow at residues 548-572 (HKCT…LRSH), 578-603 (YVCE…NRTH), and 609-634 (YVCK…KTVH). Disordered regions lie at residues 622–728 (DPSS…YSNN), 865–919 (RSSG…DLPS), 1126–1155 (SVVL…VSKS), and 1327–1368 (HYQG…GNQS). Residues 634–650 (HGPEAHVTKKQRGDIHP) show a composition bias toward basic and acidic residues. Positions 660–685 (SHSQTRSPGQQTQGATGEQKDLNSTT) are enriched in polar residues. The segment covering 686 to 701 (SRREECLQVKAVKSEK) has biased composition (basic and acidic residues). Polar residues predominate over residues 702–728 (PMTSQPSPGGQSTCSSEQSPISNYSNN). Low complexity predominate over residues 865–882 (RSSGISPCFSSRRSSDAS). Over residues 1330-1355 (GVNQSSPMTLGQVSPTSQSSLHQGPQ) the composition is skewed to polar residues.

It belongs to the GLI C2H2-type zinc-finger protein family. Phosphorylation is essential for its proteolytic processing. In terms of processing, the repressor form (GLI3R), a C-terminally truncated form is generated from the full-length GLI3 protein (GLI3FL) through proteolytic processing.

The protein resides in the nucleus. The protein localises to the cytoplasm. Has a dual function as a transcriptional activator and a repressor of the sonic hedgehog (Shh) pathway, and plays a role in limb development. The full-length GLI3 form (GLI3FL) acts as an activator (GLI3A) while GLI3R, its C-terminally truncated form, acts as a repressor. This Gallus gallus (Chicken) protein is Transcriptional activator GLI3 (GLI3).